Consider the following 386-residue polypeptide: MGMQMKNFKKMMTLMALCLSVAITTSGYATTLPDIPEPLKNGTGAIDNNGVIYVGLGTAGTSWYKIDLKKQHKDWERIKSFPGGAREQSVSVFLNDELYVFGGVGKKNSESPLQVYSDVYKYSPVKNTWQKVDTISPVGLTGHTGVKLNETMVLITGGVNEHIFDKYFIDIAAAAADESEKNKVIYNYFNKPAKDYFFNKIVFIYNAKENTWKNAGELPDAGTAGSSSVMENNFLMLINGELKPGLRTDVIYRAMWDNDKLTWLKNSQLPPSPGEQQQEGLAGAFSGYSHGVLLVGGGANFPGAKQNYTNGKFYSHEGINKKWRDEVYGLVNGHWQYMGKMKQPLGYGVSVSYGDEVFLIGGENAKGKPVSSVTSFTMRDGNLLIK.

The signal sequence occupies residues 1-29 (MGMQMKNFKKMMTLMALCLSVAITTSGYA). Kelch repeat units lie at residues 51-95 (VIYV…VFLN), 97-149 (ELYV…VKLN), 151-186 (TMVL…KVIY), 187-232 (NYFN…VMEN), 235-284 (LMLI…LAGA), 306-355 (QNYT…SYGD), and 357-386 (VFLI…LLIK). Glu241 serves as the catalytic Proton acceptor.

It belongs to the NanM family. In terms of assembly, homodimer.

The protein localises to the periplasm. It catalyses the reaction N-acetyl-alpha-neuraminate = N-acetyl-beta-neuraminate. Its function is as follows. Converts alpha-N-acetylneuranimic acid (Neu5Ac) to the beta-anomer, accelerating the equilibrium between the alpha- and beta-anomers. Probably facilitates sialidase-negative bacteria to compete successfully for limited amounts of extracellular Neu5Ac, which is likely taken up in the beta-anomer. In addition, the rapid removal of sialic acid from solution might be advantageous to the bacterium to damp down host responses. This is N-acetylneuraminate epimerase from Salmonella choleraesuis (strain SC-B67).